The sequence spans 244 residues: Transforming protein v-Fos/v-Fox (244 aa).

Residues 1–236 (DSLSYYHSPA…LFPASSGHSG (236 aa)) form a transforming protein v-Fos region. A bZIP domain is found at 113-176 (EVKRRIRRER…EKLEFILAAH (64 aa)). A basic motif region spans residues 115 to 135 (KRRIRRERNKMAAAKCRNRRR). Positions 141 to 169 (LQAETDQLEDEKSALQTEIANLLKEKEKL) are leucine-zipper. A transforming protein v-Fox region spans residues 237-244 (FISMAGWQ).

It belongs to the bZIP family. Fos subfamily.

It localises to the host nucleus. In Mus musculus (Mouse), this protein is Transforming protein v-Fos/v-Fox (FOS-FOX).